The chain runs to 1048 residues: Cysteine-rich motor neuron 1 protein (1048 aa).

A signal peptide spans 1-46 (MYLAAVSAGRRRPGGDGGGGGGGWHLAAAGWLLLLALLLGQPGTRA). In terms of domain architecture, IGFBP N-terminal spans 47–124 (LVCLPCDESK…EYEVGVCEDE (78 aa)). Topologically, residues 47 to 952 (LVCLPCDESK…HPSEDASVSS (906 aa)) are extracellular. Cystine bridges form between C49–C72, C52–C74, C57–C75, and C63–C78. An N-linked (GlcNAc...) asparagine glycan is attached at N83. 2 cysteine pairs are disulfide-bonded: C86/C102 and C96/C121. The short motif at 326-328 (RGD) is the Cell attachment site element. 2 consecutive VWFC domains span residues 346-403 (PTCI…PVCE) and 413-469 (AGCY…PVCE). Antistasin-like domains lie at 481 to 510 (CELL…ICQC), 517 to 544 (CTGL…ICQC), 551 to 576 (CKPI…ICRC), and 579 to 604 (CPEM…ICKC). N486 is a glycosylation site (N-linked (GlcNAc...) asparagine). 2 VWFC domains span residues 618-675 (GSCL…PSCP) and 689-747 (SICH…PQCP). N758 carries an N-linked (GlcNAc...) asparagine glycan. 2 VWFC domains span residues 763-821 (SYCK…PYCI) and 829-886 (VVCH…PMCP). Positions 904–906 (RGD) match the Cell attachment site motif. A glycan (N-linked (GlcNAc...) asparagine) is linked at N913. Residues 953 to 973 (VALVTVPITIALLVIIVFLLI) traverse the membrane as a helical segment. Over 974–1048 (NQKKQWIPVS…LQADNFYQTV (75 aa)) the chain is Cytoplasmic.

It localises to the membrane. Its function is as follows. May play a role in CNS development by interacting with growth factors implicated in motor neuron differentiation and survival. The polypeptide is Cysteine-rich motor neuron 1 protein (CRIM1) (Gallus gallus (Chicken)).